Here is a 174-residue protein sequence, read N- to C-terminus: 3-hydroxydecanoyl-[acyl-carrier-protein] dehydratase (174 aa).

His-71 is an active-site residue.

Belongs to the thioester dehydratase family. FabA subfamily. As to quaternary structure, homodimer.

It is found in the cytoplasm. The catalysed reaction is a (3R)-hydroxyacyl-[ACP] = a (2E)-enoyl-[ACP] + H2O. It carries out the reaction (3R)-hydroxydecanoyl-[ACP] = (2E)-decenoyl-[ACP] + H2O. The enzyme catalyses (2E)-decenoyl-[ACP] = (3Z)-decenoyl-[ACP]. It participates in lipid metabolism; fatty acid biosynthesis. Necessary for the introduction of cis unsaturation into fatty acids. Catalyzes the dehydration of (3R)-3-hydroxydecanoyl-ACP to E-(2)-decenoyl-ACP and then its isomerization to Z-(3)-decenoyl-ACP. Can catalyze the dehydratase reaction for beta-hydroxyacyl-ACPs with saturated chain lengths up to 16:0, being most active on intermediate chain length. The protein is 3-hydroxydecanoyl-[acyl-carrier-protein] dehydratase of Nitrobacter winogradskyi (strain ATCC 25391 / DSM 10237 / CIP 104748 / NCIMB 11846 / Nb-255).